Here is a 436-residue protein sequence, read N- to C-terminus: Trigger factor (436 aa).

The PPIase FKBP-type domain occupies 161-246; the sequence is DLRVNMDFVG…LNKVEKQDLP (86 aa).

This sequence belongs to the FKBP-type PPIase family. Tig subfamily.

The protein localises to the cytoplasm. It carries out the reaction [protein]-peptidylproline (omega=180) = [protein]-peptidylproline (omega=0). Its function is as follows. Involved in protein export. Acts as a chaperone by maintaining the newly synthesized protein in an open conformation. Functions as a peptidyl-prolyl cis-trans isomerase. This Tolumonas auensis (strain DSM 9187 / NBRC 110442 / TA 4) protein is Trigger factor.